The following is a 224-amino-acid chain: UPF0758 protein Patl_0046 (224 aa).

Residues 102–224 (VFNSAQQTKH…AVSFAERGLI (123 aa)) form the MPN domain. The Zn(2+) site is built by His173, His175, and Asp186. The JAMM motif signature appears at 173–186 (HNHPSGVAEPSQAD).

The protein belongs to the UPF0758 family.

This Pseudoalteromonas atlantica (strain T6c / ATCC BAA-1087) protein is UPF0758 protein Patl_0046.